The following is a 314-amino-acid chain: Homoserine kinase (314 aa).

An ATP-binding site is contributed by 97-107 (PPARGMGSSAT).

The protein belongs to the GHMP kinase family. Homoserine kinase subfamily.

Its subcellular location is the cytoplasm. It catalyses the reaction L-homoserine + ATP = O-phospho-L-homoserine + ADP + H(+). It participates in amino-acid biosynthesis; L-threonine biosynthesis; L-threonine from L-aspartate: step 4/5. Catalyzes the ATP-dependent phosphorylation of L-homoserine to L-homoserine phosphate. In Synechococcus sp. (strain RCC307), this protein is Homoserine kinase.